We begin with the raw amino-acid sequence, 321 residues long: MSEGVAQLKHEGSRQQVVVAGAAAGLVSRFVIAPLDVIKIRLQLQIHSLSEPTSYRGLNGPVYKGTLGTLKQILRDEGVTGLWKGNIPAELLYLTYGSVQFSAYTNISQMLDTIPAPYTLPSSANSFISGAGAGAAATTVTYPLDLLRTRFAAQGKDRVYTSIVASLKSIAQHEGPTGFFRGLGAGVSQIVPYMGLFFASYESLKPVMADSPLPLPLGSSDAVAGVVASVVSKTAVYPLDTTRKRLQVQGPNRARYVHRNIPTYSGVLMTLQHIWKHEGRRGMYRGLTVSLLKAAPASAVTMWTYERAMGIMVAFEKDGME.

Solcar repeat units follow at residues 12-110 (GSRQ…ISQM), 121-207 (PSSA…LKPV), and 216-311 (PLGS…AMGI). A run of 6 helical transmembrane segments spans residues 17–38 (VVVA…LDVI), 91–107 (LLYL…YTNI), 127–147 (FISG…LDLL), 182–199 (GLGA…LFFA), 213–231 (LPLP…ASVV), and 286–303 (GLTV…VTMW).

It belongs to the mitochondrial carrier (TC 2.A.29) family.

The protein localises to the mitochondrion inner membrane. Its function is as follows. Mitochondrial transporter that mediates uptake of thiamine pyrophosphate (ThPP) into mitochondria. This is Mitochondrial thiamine pyrophosphate carrier 1 (TPC1) from Phaeosphaeria nodorum (strain SN15 / ATCC MYA-4574 / FGSC 10173) (Glume blotch fungus).